The sequence spans 215 residues: Chloramphenicol acetyltransferase (215 aa).

Histidine 189 functions as the Proton acceptor in the catalytic mechanism.

The protein belongs to the chloramphenicol acetyltransferase family. As to quaternary structure, homotrimer.

It carries out the reaction chloramphenicol + acetyl-CoA = chloramphenicol 3-acetate + CoA. This enzyme is an effector of chloramphenicol resistance in bacteria. This chain is Chloramphenicol acetyltransferase (cat), found in Staphylococcus intermedius.